The chain runs to 156 residues: Ribosomal RNA large subunit methyltransferase H (156 aa).

Residues leucine 73, glycine 104, and 123-128 each bind S-adenosyl-L-methionine; that span reads LSSLTL.

The protein belongs to the RNA methyltransferase RlmH family. As to quaternary structure, homodimer.

It is found in the cytoplasm. The catalysed reaction is pseudouridine(1915) in 23S rRNA + S-adenosyl-L-methionine = N(3)-methylpseudouridine(1915) in 23S rRNA + S-adenosyl-L-homocysteine + H(+). Specifically methylates the pseudouridine at position 1915 (m3Psi1915) in 23S rRNA. This Neisseria gonorrhoeae (strain ATCC 700825 / FA 1090) protein is Ribosomal RNA large subunit methyltransferase H.